We begin with the raw amino-acid sequence, 483 residues long: Regulatory protein ViaA (483 aa).

Belongs to the ViaA family. Homodimer. Interacts with RavA.

The protein localises to the cytoplasm. Functionally, component of the RavA-ViaA chaperone complex, which may act on the membrane to optimize the function of some of the respiratory chains. ViaA stimulates the ATPase activity of RavA. The protein is Regulatory protein ViaA of Salmonella typhi.